The sequence spans 303 residues: Mycothiol acetyltransferase (303 aa).

N-acetyltransferase domains lie at 10–156 and 162–303; these read ALPG…LAVP and LAVR…SGPR. Glu41 lines the 1D-myo-inositol 2-(L-cysteinylamino)-2-deoxy-alpha-D-glucopyranoside pocket. 86 to 88 serves as a coordination point for acetyl-CoA; that stretch reads LLV. Residues Glu189, Lys228, and Glu235 each contribute to the 1D-myo-inositol 2-(L-cysteinylamino)-2-deoxy-alpha-D-glucopyranoside site. Residues 239–241 and 246–252 each bind acetyl-CoA; these read LGV and SGAGLGR. Residue Tyr272 coordinates 1D-myo-inositol 2-(L-cysteinylamino)-2-deoxy-alpha-D-glucopyranoside. 277–282 lines the acetyl-CoA pocket; sequence NLRAVR.

It belongs to the acetyltransferase family. MshD subfamily. In terms of assembly, monomer.

The enzyme catalyses 1D-myo-inositol 2-(L-cysteinylamino)-2-deoxy-alpha-D-glucopyranoside + acetyl-CoA = mycothiol + CoA + H(+). In terms of biological role, catalyzes the transfer of acetyl from acetyl-CoA to desacetylmycothiol (Cys-GlcN-Ins) to form mycothiol. The polypeptide is Mycothiol acetyltransferase (Kineococcus radiotolerans (strain ATCC BAA-149 / DSM 14245 / SRS30216)).